Reading from the N-terminus, the 84-residue chain is Exodeoxyribonuclease 7 small subunit (84 aa).

The protein belongs to the XseB family. Heterooligomer composed of large and small subunits.

The protein resides in the cytoplasm. It catalyses the reaction Exonucleolytic cleavage in either 5'- to 3'- or 3'- to 5'-direction to yield nucleoside 5'-phosphates.. Its function is as follows. Bidirectionally degrades single-stranded DNA into large acid-insoluble oligonucleotides, which are then degraded further into small acid-soluble oligonucleotides. This chain is Exodeoxyribonuclease 7 small subunit, found in Yersinia enterocolitica serotype O:8 / biotype 1B (strain NCTC 13174 / 8081).